Consider the following 177-residue polypeptide: ATP-dependent protease subunit HslV (177 aa).

Residue T2 is part of the active site. Na(+) is bound by residues G157, C160, and T163.

Belongs to the peptidase T1B family. HslV subfamily. As to quaternary structure, a double ring-shaped homohexamer of HslV is capped on each side by a ring-shaped HslU homohexamer. The assembly of the HslU/HslV complex is dependent on binding of ATP.

The protein localises to the cytoplasm. It carries out the reaction ATP-dependent cleavage of peptide bonds with broad specificity.. Its activity is regulated as follows. Allosterically activated by HslU binding. Protease subunit of a proteasome-like degradation complex believed to be a general protein degrading machinery. This chain is ATP-dependent protease subunit HslV, found in Aeromonas salmonicida (strain A449).